Consider the following 128-residue polypeptide: SH2 domain-containing protein 1A (128 aa).

In terms of domain architecture, SH2 spans 6-102; sequence VYHGKISRET…GIVIPLQYPV (97 aa). The segment at 67–92 is interaction with FYN SH3 domain; sequence DTAPGVHKRFFRKIKNLISAFQKPDQ. An N6-acetyllysine modification is found at K89. Positions 103–128 are disordered; that stretch reads EKKSSARSTQGATGRREDPDVFLKTP. The span at 116–128 shows a compositional bias: basic and acidic residues; that stretch reads GRREDPDVFLKTP.

In terms of assembly, interacts with CD84, CD244, LY9, SLAMF1 and FYN. Interacts with NTRK1, NTRK2 and NTRK3.

It localises to the cytoplasm. Its function is as follows. Cytoplasmic adapter regulating receptors of the signaling lymphocytic activation molecule (SLAM) family such as SLAMF1, CD244, LY9, CD84, SLAMF6 and SLAMF7. In SLAM signaling seems to cooperate with SH2D1B/EAT-2. Initially it has been proposed that association with SLAMF1 prevents SLAMF1 binding to inhibitory effectors including INPP5D/SHIP1 and PTPN11/SHP-2. However, by simultaneous interactions, recruits FYN which subsequently phosphorylates and activates SLAMF1. Positively regulates CD244/2B4- and CD84-mediated natural killer (NK) cell functions. Can also promote CD48-, SLAMF6 -, LY9-, and SLAMF7-mediated NK cell activation. In the context of NK cell-mediated cytotoxicity enhances conjugate formation with target cells. May also regulate the activity of the neurotrophin receptors NTRK1, NTRK2 and NTRK3. The chain is SH2 domain-containing protein 1A (SH2D1A) from Sus scrofa (Pig).